The following is a 388-amino-acid chain: 1-deoxy-D-xylulose 5-phosphate reductoisomerase (388 aa).

7 residues coordinate NADPH: Thr13, Gly14, Ser15, Ile16, Arg40, Asn41, and Asn124. Lys125 contributes to the 1-deoxy-D-xylulose 5-phosphate binding site. Glu126 lines the NADPH pocket. Asp150 is a Mn(2+) binding site. 1-deoxy-D-xylulose 5-phosphate contacts are provided by Ser151, Glu152, Ser176, and His199. Glu152 lines the Mn(2+) pocket. Gly205 contacts NADPH. 4 residues coordinate 1-deoxy-D-xylulose 5-phosphate: Ser212, Asn217, Lys218, and Glu221. Glu221 is a Mn(2+) binding site.

This sequence belongs to the DXR family. Homodimer. It depends on Mg(2+) as a cofactor. Requires Mn(2+) as cofactor. Co(2+) is required as a cofactor.

It catalyses the reaction 2-C-methyl-D-erythritol 4-phosphate + NADP(+) = 1-deoxy-D-xylulose 5-phosphate + NADPH + H(+). It functions in the pathway isoprenoid biosynthesis; isopentenyl diphosphate biosynthesis via DXP pathway; isopentenyl diphosphate from 1-deoxy-D-xylulose 5-phosphate: step 1/6. With respect to regulation, competitively inhibited by the antibiotic fosmidomycin. Its function is as follows. Catalyzes the NADPH-dependent rearrangement and reduction of 1-deoxy-D-xylulose-5-phosphate (DXP) to 2-C-methyl-D-erythritol 4-phosphate (MEP). Cannot use NADH instead of NADPH as the reducing agent. This is 1-deoxy-D-xylulose 5-phosphate reductoisomerase from Zymomonas mobilis subsp. mobilis (strain ATCC 31821 / ZM4 / CP4).